Consider the following 522-residue polypeptide: 2-isopropylmalate synthase (522 aa).

Residues 5–267 (VIIFDTTLRD…ETGINAKEIH (263 aa)) enclose the Pyruvate carboxyltransferase domain. Positions 14, 202, 204, and 238 each coordinate Mn(2+). The segment at 392-522 (QLQQLVVQSD…MHKNRELGGV (131 aa)) is regulatory domain.

Belongs to the alpha-IPM synthase/homocitrate synthase family. LeuA type 1 subfamily. As to quaternary structure, homodimer. Requires Mn(2+) as cofactor.

Its subcellular location is the cytoplasm. The enzyme catalyses 3-methyl-2-oxobutanoate + acetyl-CoA + H2O = (2S)-2-isopropylmalate + CoA + H(+). It functions in the pathway amino-acid biosynthesis; L-leucine biosynthesis; L-leucine from 3-methyl-2-oxobutanoate: step 1/4. In terms of biological role, catalyzes the condensation of the acetyl group of acetyl-CoA with 3-methyl-2-oxobutanoate (2-ketoisovalerate) to form 3-carboxy-3-hydroxy-4-methylpentanoate (2-isopropylmalate). The sequence is that of 2-isopropylmalate synthase from Shewanella sp. (strain MR-4).